The chain runs to 349 residues: Protein-glutamate methylesterase/protein-glutamine glutaminase (349 aa).

The Response regulatory domain occupies 5 to 122; it reads RVLSVDDSAL…REGMLAYNEM (118 aa). Residue Asp56 is modified to 4-aspartylphosphate. One can recognise a CheB-type methylesterase domain in the interval 152–344; it reads LLSSEKLIAI…QQMLAKISAG (193 aa). Catalysis depends on residues Ser164, His190, and Asp286.

This sequence belongs to the CheB family. In terms of assembly, interacts with CheA. Binds to a C-terminal pentapeptide sequence carried by certain receptors. Phosphorylated by CheA. Phosphorylation of the N-terminal regulatory domain activates the methylesterase activity.

The protein localises to the cytoplasm. The enzyme catalyses [protein]-L-glutamate 5-O-methyl ester + H2O = L-glutamyl-[protein] + methanol + H(+). The catalysed reaction is L-glutaminyl-[protein] + H2O = L-glutamyl-[protein] + NH4(+). Methylesterase activity is activated via phosphorylation in response to negative chemotactic stimuli and is inhibited in the presence of attractants. Activation requires both CheA and CheW. Functionally, involved in chemotaxis. Part of a chemotaxis signal transduction system that modulates chemotaxis in response to various stimuli. Catalyzes the demethylation of specific methylglutamate residues introduced into the chemoreceptors (methyl-accepting chemotaxis proteins or MCP) by CheR. Also mediates the irreversible deamidation of specific glutamine residues to glutamic acid. Catalyzes its own deactivation by removing the activating phosphoryl group. In Escherichia coli (strain K12), this protein is Protein-glutamate methylesterase/protein-glutamine glutaminase.